We begin with the raw amino-acid sequence, 2179 residues long: Probable inactive serine/threonine-protein kinase lvsG (2179 aa).

Positions 100–167 (DHDLNKNKNN…TSISLNDLNS (68 aa)) are disordered. Composition is skewed to low complexity over residues 106-121 (NKNNNNNSEENNNNSG) and 141-159 (LSPSSSSSTSTTTTPLSTS). The stretch at 216 to 256 (LYERSLKTSQQQQQQQQQQFKFQPNETLSLWEYFDEINSPP) is one WD 1 repeat. Disordered stretches follow at residues 281–300 (LDNKDDDDNNNNNNNSNSQS), 523–556 (DNDNDSRDDVDNSSSSNNNNNNNNEDQSGKTVGW), 589–621 (DSMGGGIGSIGSTGGITNSSNNGGGGGSGNSGK), 778–801 (KSLKYQRQQQTQQHQQQTQQQPQF), 844–959 (NNHH…NKPS), 1033–1055 (AQQQQSQQQSQQQQANSPNSKQL), 1079–1153 (GISK…STTD), 1339–1362 (NHSNSSNNNNNNNNNNNNNNKNGS), and 1785–1807 (TTTTTTTTTTTTTNNNNENPNSL). The region spanning 463–801 (YHQPLENQFE…QQQTQQQPQF (339 aa)) is the BEACH domain. Over residues 534–548 (NSSSSNNNNNNNNED) the composition is skewed to low complexity. Over residues 590 to 602 (SMGGGIGSIGSTG) the composition is skewed to gly residues. Low complexity-rich tracts occupy residues 783–800 (QRQQQTQQHQQQTQQQPQ), 853–943 (NSNI…GVNN), 1033–1047 (AQQQQSQQQSQQQQA), and 1084–1098 (TTNAPTTNNTTTNSN). Residues 1021 to 1049 (LQQQLQQQQQQQAQQQQSQQQSQQQQANS) are a coiled coil. The Protein kinase domain maps to 1064–1400 (ESMIKKYSNG…VNELLSSSLF (337 aa)). Residues 1099 to 1122 (MGDSIGNNITSPPSPTSLKDSSSI) show a composition bias toward polar residues. Residues 1123–1134 (QQQQQQQQQQQQ) are compositionally biased toward low complexity. Residues 1135–1153 (NSESTRPITPPNVSNSTTD) show a composition bias toward polar residues. Composition is skewed to low complexity over residues 1339–1360 (NHSNSSNNNNNNNNNNNNNNKN) and 1785–1801 (TTTTTTTTTTTTTNNNN). WD repeat units follow at residues 1864 to 1903 (EHNASIKSLAVSPSEERFISGSKDNLVKIWSLDSTKSLTT), 1906 to 1942 (QHMHTAHTVHFVSSLVASCDITSIQVWDPESKIKVNV), 1945 to 1983 (EPTGSFSCFEPISSKYLIASTCESTLSFYDLSMGSLTHE), 2007 to 2048 (SNSN…ILEQ), 2052 to 2089 (HHDSPVNKLIAQGSRYLISCGDKSVIQWDLHQSPPIIS), and 2149 to 2179 (PKQSNILSLSFFPLHHVLLAGTDDGFIKICQ).

It belongs to the protein kinase superfamily. Ser/Thr protein kinase family.

In Dictyostelium discoideum (Social amoeba), this protein is Probable inactive serine/threonine-protein kinase lvsG (lvsG).